Reading from the N-terminus, the 535-residue chain is Large neutral amino acids transporter small subunit 2 (535 aa).

Residues 1–10 (MEKGARHRHN) show a composition bias toward basic residues. A disordered region spans residues 1-30 (MEKGARHRHNTDKNHAGGSESEDFPEASSG). Topologically, residues 1 to 44 (MEKGARHRHNTDKNHAGGSESEDFPEASSGGGGVALKKEIGLVS) are cytoplasmic. Ser-19, Ser-28, and Ser-29 each carry phosphoserine. Residues 45–65 (ACGIIVGNIIGSGIFVSPKGV) traverse the membrane as a helical segment. Ile-53 is an L-leucine binding site. At 66–73 (LENAGSVG) the chain is on the extracellular side. A helical transmembrane segment spans residues 74–95 (LAVIVWIVTGLITAVGALCYAE). At 96–116 (LGVTIPKSGGDYSYVKDIFGG) the chain is on the cytoplasmic side. Residues 117 to 149 (LAGFLRLWIAVLVIYPTNQAVIALTFSNYVLQP) form a helical membrane-spanning segment. Asn-134 is an L-tryptophan binding site. Over 150–157 (LFPTCFPP) the chain is Extracellular. A helical transmembrane segment spans residues 158–178 (DSGLRLLAAICLLLLTWVNCS). At 179–181 (SVR) the chain is on the cytoplasmic side. The chain crosses the membrane as a helical span at residues 182–210 (WATRVQDIFTAGKLLALALIIIMGVVQIC). The Extracellular segment spans residues 211–230 (KGEYFWLEPKNAFDNFQEPD). The helical transmembrane segment at 231–252 (IGLIALAFLQGSFAYGGWNFLN) threads the bilayer. An L-leucine-binding site is contributed by Gly-246. Residues 253–265 (YVTEELVDPYKNL) are Cytoplasmic-facing. A helical transmembrane segment spans residues 266 to 287 (PRAIFISIPLVTFVYVFANVAY). Topologically, residues 288–312 (ITAMSPQELLASNAVAVTFGEKLLG) are extracellular. The helical transmembrane segment at 313–338 (VMAWIMPISVALSTFGGVNGSLFTSS) threads the bilayer. At 339-364 (RLFFAGAREGHLPSVLAMIHVKRCTP) the chain is on the cytoplasmic side. The helical transmembrane segment at 365 to 382 (IPALLFTCLSTLLMLVTS) threads the bilayer. At 383-386 (DMYT) the chain is on the extracellular side. A helical membrane pass occupies residues 387–408 (LINYVGFINYLFYGVTVAGQIV). Residue Asn-395 participates in L-tryptophan binding. The Cytoplasmic portion of the chain corresponds to 409 to 423 (LRWKKPDIPRPIKIN). Transmembrane regions (helical) follow at residues 424-446 (LLFPIIYLLFWAFLLIFSLWSEP) and 447-466 (VVCGIGLAIMLTGVPVYFLG). Residues 467 to 535 (VYWQHKPKCF…DKDSLEQSQP (69 aa)) are Cytoplasmic-facing. Residues 500 to 535 (GGSGTEGTREDMEEQQQPICQPSPGKDKDSLEQSQP) form a disordered region. Over residues 524 to 535 (GKDKDSLEQSQP) the composition is skewed to basic and acidic residues. Position 529 is a phosphoserine (Ser-529).

It belongs to the amino acid-polyamine-organocation (APC) superfamily. L-type amino acid transporter (LAT) (TC 2.A.3.8) family. As to quaternary structure, disulfide-linked heterodimer composed of the catalytic light chain subunit SLC7A8 and the heavy chain subunit SLC3A2. SLC3A2 acts as a chaperone for correct plasma membrane trafficking and stabilization of SLC7A8 and modulates the substrate affinity and specificity of SLC7A8. ICAM-1 associates with the heterodimer SLC3A2/SLC7A8; facilitates leucine uptake. Mainly expressed in kidney and small intestine.

It is found in the cell membrane. It localises to the basolateral cell membrane. The catalysed reaction is L-histidine(in) + L-phenylalanine(out) = L-histidine(out) + L-phenylalanine(in). It carries out the reaction L-tryptophan(in) + L-phenylalanine(out) = L-tryptophan(out) + L-phenylalanine(in). It catalyses the reaction L-isoleucine(in) + L-phenylalanine(out) = L-isoleucine(out) + L-phenylalanine(in). The enzyme catalyses L-valine(in) + L-phenylalanine(out) = L-valine(out) + L-phenylalanine(in). The catalysed reaction is L-leucine(in) + L-phenylalanine(out) = L-leucine(out) + L-phenylalanine(in). It carries out the reaction L-glutamine(in) + L-phenylalanine(out) = L-glutamine(out) + L-phenylalanine(in). It catalyses the reaction L-cysteine(in) + L-phenylalanine(out) = L-cysteine(out) + L-phenylalanine(in). The enzyme catalyses L-phenylalanine(out) + L-methionine(in) = L-phenylalanine(in) + L-methionine(out). The catalysed reaction is L-leucine(out) + L-methionine(in) = L-leucine(in) + L-methionine(out). It carries out the reaction L-cysteine(out) + L-methionine(in) = L-cysteine(in) + L-methionine(out). It catalyses the reaction S-methylmercury-L-cysteine(out) + L-methionine(in) = S-methylmercury-L-cysteine(in) + L-methionine(out). The enzyme catalyses S-methylmercury-L-cysteine(in) + L-leucine(out) = S-methylmercury-L-cysteine(out) + L-leucine(in). The catalysed reaction is S-methylmercury-L-cysteine(in) + L-phenylalanine(out) = S-methylmercury-L-cysteine(out) + L-phenylalanine(in). It carries out the reaction L-phenylalanine(out) + L-serine(in) = L-phenylalanine(in) + L-serine(out). It catalyses the reaction L-phenylalanine(out) + glycine(in) = L-phenylalanine(in) + glycine(out). The enzyme catalyses L-phenylalanine(out) + L-alanine(in) = L-phenylalanine(in) + L-alanine(out). The catalysed reaction is 3,3',5-triiodo-L-thyronine(out) = 3,3',5-triiodo-L-thyronine(in). It carries out the reaction 3,3'-diiodo-L-thyronine(out) = 3,3'-diiodo-L-thyronine(in). It catalyses the reaction L-dopa(out) + L-phenylalanine(in) = L-dopa(in) + L-phenylalanine(out). The transporter activity is inhibited by 2-aminobicyclo-(2,2,1)heptane-2-carboxylic acid (BCH) (a specific inhibitor of system L transport). Functionally, associates with SLC3A2 to form a functional heterodimeric complex that translocates small and large neutral amino acids with broad specificity and a stoichiometry of 1:1. Functions as amino acid antiporter mediating the influx of extracellular essential amino acids mainly in exchange with the efflux of highly concentrated intracellular amino acids. Has relatively symmetrical selectivities but strongly asymmetrical substrate affinities at both the intracellular and extracellular sides of the transporter. This asymmetry allows SLC7A8 to regulate intracellular amino acid pools (mM concentrations) by exchange with external amino acids (uM concentration range), equilibrating the relative concentrations of different amino acids across the plasma membrane instead of mediating their net uptake. May play an essential role in the reabsorption of neutral amino acids from the epithelial cells to the bloodstream in the kidney. Involved in the uptake of methylmercury (MeHg) when administered as the L-cysteine or D,L-homocysteine complexes, and hence plays a role in metal ion homeostasis and toxicity. Involved in the cellular activity of small molecular weight nitrosothiols, via the stereoselective transport of L-nitrosocysteine (L-CNSO) across the transmembrane. Imports the thyroid hormone diiodothyronine (T2) and to a smaller extent triiodothyronine (T3) but not rT 3 or thyroxine (T4). Mediates the uptake of L-DOPA. May participate in auditory function. The protein is Large neutral amino acids transporter small subunit 2 of Oryctolagus cuniculus (Rabbit).